The primary structure comprises 84 residues: MERGSRKTRVGRVVSDKMDKTVVVLVEDFVRHPLYGKAMKRTNKFKTHDELNECGIGDKVKIMETKPLSKDKRWRLVQIVQKAK.

This sequence belongs to the universal ribosomal protein uS17 family. In terms of assembly, part of the 30S ribosomal subunit.

Functionally, one of the primary rRNA binding proteins, it binds specifically to the 5'-end of 16S ribosomal RNA. In Alkaliphilus metalliredigens (strain QYMF), this protein is Small ribosomal subunit protein uS17.